The following is a 619-amino-acid chain: tRNA (guanine(37)-N(1))-methyltransferase 2 (619 aa).

A mitochondrion-targeting transit peptide spans 1–10 (MVSKLSLFRA). S-adenosyl-L-methionine is bound by residues R434, 472–473 (DL), 500–501 (DG), and N523.

Belongs to the class I-like SAM-binding methyltransferase superfamily. TRM5/TYW2 family. As to quaternary structure, monomer.

It is found in the mitochondrion matrix. The protein localises to the nucleus. The protein resides in the cytoplasm. The enzyme catalyses guanosine(37) in tRNA + S-adenosyl-L-methionine = N(1)-methylguanosine(37) in tRNA + S-adenosyl-L-homocysteine + H(+). In terms of biological role, specifically methylates the N1 position of guanosine-37 in various cytoplasmic and mitochondrial tRNAs. Methylation is not dependent on the nature of the nucleoside 5' of the target nucleoside. This is the first step in the biosynthesis of wybutosine (yW), a modified base adjacent to the anticodon of tRNAs and required for accurate decoding. The chain is tRNA (guanine(37)-N(1))-methyltransferase 2 from Arabidopsis thaliana (Mouse-ear cress).